The chain runs to 64 residues: U9-ctenitoxin-Pr1a (64 aa).

5 disulfides stabilise this stretch: C3/C15, C9/C24, C14/C47, C34/C55, and C49/C61.

As to expression, expressed by the venom gland.

It localises to the secreted. Non-toxic to mice and insects. In Phoneutria reidyi (Brazilian Amazonian armed spider), this protein is U9-ctenitoxin-Pr1a.